The sequence spans 232 residues: MSMPFYVAPEQLMKDRADYARKGIARGRALIGAVWEGGIIIVAENPSRSLHKLSEIYDRIAFGGVGKYNEFDQLRVAGIRHADLKGYAYAREDVDARSLANLYAQYLGTVFTHEMKPLEVEILVAELGNGHRESQLFQILYDGTVMDEREFAVLGGDADAIAERFRALYDASGPRERLLQSARDALSGQRPPIGADDLEVVVLEDRGERRCFRRLEVDEVREALGDQPEGSA.

Belongs to the peptidase T1A family. In terms of assembly, the 20S proteasome core is composed of 14 alpha and 14 beta subunits that assemble into four stacked heptameric rings, resulting in a barrel-shaped structure. The two inner rings, each composed of seven catalytic beta subunits, are sandwiched by two outer rings, each composed of seven alpha subunits. The catalytic chamber with the active sites is on the inside of the barrel. Has a gated structure, the ends of the cylinder being occluded by the N-termini of the alpha-subunits. Is capped by the proteasome-associated ATPase, ARC.

The protein resides in the cytoplasm. It participates in protein degradation; proteasomal Pup-dependent pathway. With respect to regulation, the formation of the proteasomal ATPase ARC-20S proteasome complex, likely via the docking of the C-termini of ARC into the intersubunit pockets in the alpha-rings, may trigger opening of the gate for substrate entry. Interconversion between the open-gate and close-gate conformations leads to a dynamic regulation of the 20S proteasome proteolysis activity. Functionally, component of the proteasome core, a large protease complex with broad specificity involved in protein degradation. In Acidimicrobium ferrooxidans (strain DSM 10331 / JCM 15462 / NBRC 103882 / ICP), this protein is Proteasome subunit alpha.